A 263-amino-acid chain; its full sequence is Ribosomal RNA small subunit methyltransferase J (263 aa).

S-adenosyl-L-methionine-binding positions include 108–109 (RD), 124–125 (ER), and Asp178.

This sequence belongs to the methyltransferase superfamily. RsmJ family.

It is found in the cytoplasm. The enzyme catalyses guanosine(1516) in 16S rRNA + S-adenosyl-L-methionine = N(2)-methylguanosine(1516) in 16S rRNA + S-adenosyl-L-homocysteine + H(+). Specifically methylates the guanosine in position 1516 of 16S rRNA. The sequence is that of Ribosomal RNA small subunit methyltransferase J from Idiomarina loihiensis (strain ATCC BAA-735 / DSM 15497 / L2-TR).